The following is a 245-amino-acid chain: tRNA pseudouridine synthase A 2 (245 aa).

D53 (nucleophile) is an active-site residue. Y111 is a substrate binding site.

This sequence belongs to the tRNA pseudouridine synthase TruA family. In terms of assembly, homodimer.

It carries out the reaction uridine(38/39/40) in tRNA = pseudouridine(38/39/40) in tRNA. Functionally, formation of pseudouridine at positions 38, 39 and 40 in the anticodon stem and loop of transfer RNAs. This is tRNA pseudouridine synthase A 2 from Bacillus thuringiensis subsp. konkukian (strain 97-27).